Consider the following 300-residue polypeptide: 2-methylisocitrate lyase (300 aa).

53–55 provides a ligand contact to substrate; sequence SGD. Mg(2+)-binding residues include D92 and D94. Residues 129-130, R162, E192, 214-216, R245, and R274 contribute to the substrate site; these read CG and NMT.

Belongs to the isocitrate lyase/PEP mutase superfamily. Methylisocitrate lyase family. Mg(2+) serves as cofactor.

The enzyme catalyses 3-hydroxybutane-1,2,3-tricarboxylate = pyruvate + succinate. In terms of biological role, involved in the methylcitric acid cycle. Catalyzes the cleavage of 2-methylisocitrate to yield pyruvate and succinate. The chain is 2-methylisocitrate lyase from Halalkalibacterium halodurans (strain ATCC BAA-125 / DSM 18197 / FERM 7344 / JCM 9153 / C-125) (Bacillus halodurans).